We begin with the raw amino-acid sequence, 78 residues long: Major outer membrane lipoprotein Lpp (78 aa).

The N-terminal stretch at 1–20 (MNRTKLVLGAVILGSTLLAG) is a signal peptide. Cys-21 is lipidated: N-palmitoyl cysteine. Cys-21 carries S-diacylglycerol cysteine lipidation. The stretch at 22–75 (SSNAKIDQLSTDVQTLNAKVDQLSNDVTAIRSDVQAAKDDAARANQRLDNQAHS) forms a coiled coil. Repeats lie at residues 24 to 34 (NAKIDQLSTDV) and 38 to 48 (NAKVDQLSNDV). Lys-78 carries the N6-murein peptidoglycan lysine modification.

This sequence belongs to the Lpp family. As to quaternary structure, homotrimer.

The protein localises to the cell outer membrane. The protein resides in the secreted. It is found in the cell wall. Functionally, a highly abundant outer membrane lipoprotein that controls the distance between the inner and outer membranes. The only protein known to be covalently linked to the peptidoglycan network (PGN). Also non-covalently binds the PGN. The link between the cell outer membrane and PGN contributes to maintenance of the structural and functional integrity of the cell envelope, and maintains the correct distance between the PGN and the outer membrane. This chain is Major outer membrane lipoprotein Lpp, found in Erwinia amylovora (Fire blight bacteria).